A 627-amino-acid chain; its full sequence is MRRFTVPCILRHRISILSGAGYSPAAARLSSLAQTSTPESVLPPITSEILLESIRSSQWHIVEHVADKLTPSLVSTTLLSLVKTPNLAFNFVNHIDLYRLDFQTQCLAIAVISKLSSPKPVTQLLKEVVTSRKNSIRNLFDELVLAHDRLETKSTILFDLLVRCCCQLRMVDEAIECFYLMKEKGFYPKTETCNHILTLLSRLNRIENAWVFYADMYRMEIKSNVYTFNIMINVLCKEGKLKKAKGFLGIMEVFGIKPTIVTYNTLVQGFSLRGRIEGARLIISEMKSKGFQPDMQTYNPILSWMCNEGRASEVLREMKEIGLVPDSVSYNILIRGCSNNGDLEMAFAYRDEMVKQGMVPTFYTYNTLIHGLFMENKIEAAEILIREIREKGIVLDSVTYNILINGYCQHGDAKKAFALHDEMMTDGIQPTQFTYTSLIYVLCRKNKTREADELFEKVVGKGMKPDLVMMNTLMDGHCAIGNMDRAFSLLKEMDMMSINPDDVTYNCLMRGLCGEGKFEEARELMGEMKRRGIKPDHISYNTLISGYSKKGDTKHAFMVRDEMLSLGFNPTLLTYNALLKGLSKNQEGELAEELLREMKSEGIVPNDSSFCSVIEAMSNLDAKKSDS.

Residues Met1–Leu29 constitute a mitochondrion transit peptide. 13 PPR repeats span residues Ser154 to Pro188, Lys189 to Ser223, Asn224 to Pro258, Thr259 to Pro293, Asp294 to Val324, Asp326 to Pro360, Thr361 to Leu395, Asp396 to Pro430, Thr431 to Pro465, Asp466 to Pro500, Asp501 to Pro535, Asp536 to Pro570, and Thr571 to Pro605.

The protein belongs to the PPR family. P subfamily.

The protein localises to the mitochondrion. This is Pentatricopeptide repeat-containing protein At2g15630, mitochondrial from Arabidopsis thaliana (Mouse-ear cress).